The sequence spans 299 residues: MKKIKCALIGPGNIGTDLLYKLRRSTVLEPVWMVGVDPASDGLARAREFGLKTTDKGVDGLLPHVAADEIRIAFDATSAYVHRDNSDKLTALGVKMIDLTPAAIGPYCVPPVNLDAHLDSAQTNVNMVTCGGQATIPMVYAVSRVQPVAYGEIVATVSSRSVGPGTRKNIDEFTRTTSGAIEQVGGARKGKAIIVINPAEPPLIMRDTIHCLTDGPPDVDAITASVHAMVKEVQRYVPGYTLKNGPVFDGNRVSVFMEVEGLGDYLPKYAGNLDIMTAAAAATAERFAEQMLAATAATA.

C130 (acyl-thioester intermediate) is an active-site residue. Residues 161–169 and N272 each bind NAD(+); that span reads SVGPGTRKN.

This sequence belongs to the acetaldehyde dehydrogenase family.

It carries out the reaction acetaldehyde + NAD(+) + CoA = acetyl-CoA + NADH + H(+). This Burkholderia lata (strain ATCC 17760 / DSM 23089 / LMG 22485 / NCIMB 9086 / R18194 / 383) protein is Acetaldehyde dehydrogenase 2.